The primary structure comprises 340 residues: Adenosine kinase (340 aa).

Asp293 is a catalytic residue.

This sequence belongs to the carbohydrate kinase PfkB family. As to quaternary structure, monomer. It depends on Mg(2+) as a cofactor.

The enzyme catalyses adenosine + ATP = AMP + ADP + H(+). The protein operates within purine metabolism; AMP biosynthesis via salvage pathway; AMP from adenosine: step 1/1. Its function is as follows. ATP dependent phosphorylation of adenosine and other related nucleoside analogs to monophosphate derivatives. This Dictyostelium discoideum (Social amoeba) protein is Adenosine kinase (adk).